The following is a 76-amino-acid chain: Potassium/proton antiporter CemA (76 aa).

A helical membrane pass occupies residues 35-52; it reads QILSCLVSIFPVILDTIF.

Belongs to the CemA family.

It is found in the plastid. The protein localises to the chloroplast inner membrane. The catalysed reaction is K(+)(in) + H(+)(out) = K(+)(out) + H(+)(in). Its function is as follows. Contributes to K(+)/H(+) antiport activity by supporting proton efflux to control proton extrusion and homeostasis in chloroplasts in a light-dependent manner to modulate photosynthesis. Prevents excessive induction of non-photochemical quenching (NPQ) under continuous-light conditions. Indirectly promotes efficient inorganic carbon uptake into chloroplasts. The polypeptide is Potassium/proton antiporter CemA (Vicia faba (Broad bean)).